A 1405-amino-acid chain; its full sequence is DNA-directed RNA polymerase subunit beta' (1405 aa).

Residues C65, C67, C80, and C83 each coordinate Zn(2+). D468, D470, and D472 together coordinate Mg(2+). Zn(2+) contacts are provided by C811, C885, C892, and C895.

The protein belongs to the RNA polymerase beta' chain family. As to quaternary structure, the RNAP catalytic core consists of 2 alpha, 1 beta, 1 beta' and 1 omega subunit. When a sigma factor is associated with the core the holoenzyme is formed, which can initiate transcription. Mg(2+) is required as a cofactor. Zn(2+) serves as cofactor.

The enzyme catalyses RNA(n) + a ribonucleoside 5'-triphosphate = RNA(n+1) + diphosphate. Its function is as follows. DNA-dependent RNA polymerase catalyzes the transcription of DNA into RNA using the four ribonucleoside triphosphates as substrates. This Azobacteroides pseudotrichonymphae genomovar. CFP2 protein is DNA-directed RNA polymerase subunit beta'.